Consider the following 795-residue polypeptide: Protein ROOT HAIR DEFECTIVE 3 homolog 1 (795 aa).

The Cytoplasmic portion of the chain corresponds to 1–682 (MDADKSEGCC…EANRRGNNWL (682 aa)). The GB1/RHD3-type G domain occupies 39 to 254 (GLSYAVVSIM…IAPGGLAGDR (216 aa)). 49 to 56 (GPQSSGKS) lines the GTP pocket. Residues 218–244 (VALSSYEEKEEQFKEQIASLRQRFMHS) adopt a coiled-coil conformation. The chain crosses the membrane as a helical span at residues 683–703 (PPPWAILALIVLGFNEFMTLL). Residues 704–706 (RNP) are Lumenal-facing. The helical transmembrane segment at 707–727 (LYLGVMFVAFLLAKALWTQLD) threads the bilayer. At 728–795 (IPGEFRNGAL…PDHKSSSKED (68 aa)) the chain is on the cytoplasmic side. The disordered stretch occupies residues 761 to 795 (QGEDPPAANPENRRSSNNTSSSENPPDHKSSSKED). Over residues 775-784 (SSNNTSSSEN) the composition is skewed to low complexity. Residues 785–795 (PPDHKSSSKED) are compositionally biased toward basic and acidic residues.

The protein belongs to the TRAFAC class dynamin-like GTPase superfamily. GB1/RHD3 GTPase family. RHD3 subfamily. Specifically expressed in flowers.

Its subcellular location is the endoplasmic reticulum membrane. Probable GTP-binding protein that may be involved in cell development. This is Protein ROOT HAIR DEFECTIVE 3 homolog 1 from Arabidopsis thaliana (Mouse-ear cress).